The following is a 427-amino-acid chain: Gamma-glutamyl phosphate reductase (427 aa).

The protein belongs to the gamma-glutamyl phosphate reductase family.

It is found in the cytoplasm. It carries out the reaction L-glutamate 5-semialdehyde + phosphate + NADP(+) = L-glutamyl 5-phosphate + NADPH + H(+). It functions in the pathway amino-acid biosynthesis; L-proline biosynthesis; L-glutamate 5-semialdehyde from L-glutamate: step 2/2. Catalyzes the NADPH-dependent reduction of L-glutamate 5-phosphate into L-glutamate 5-semialdehyde and phosphate. The product spontaneously undergoes cyclization to form 1-pyrroline-5-carboxylate. This chain is Gamma-glutamyl phosphate reductase, found in Rhizobium johnstonii (strain DSM 114642 / LMG 32736 / 3841) (Rhizobium leguminosarum bv. viciae).